A 63-amino-acid chain; its full sequence is Cecropin-A1 (63 aa).

An N-terminal signal peptide occupies residues 1 to 23 (MNFYNIFVFVALILAITIGQSEA). Arg-62 carries the post-translational modification Arginine amide.

Belongs to the cecropin family.

The protein localises to the secreted. In terms of biological role, cecropins have lytic and antibacterial activity against several Gram-positive and Gram-negative bacteria. The polypeptide is Cecropin-A1 (CecA1) (Drosophila sechellia (Fruit fly)).